Consider the following 319-residue polypeptide: tRNA dimethylallyltransferase (319 aa).

Position 11-18 (11-18) interacts with ATP; sequence GPTCSGKS. A substrate-binding site is contributed by 13-18; it reads TCSGKS. Interaction with substrate tRNA regions lie at residues 36-39 and 160-164; these read DSMQ and QRIAR.

It belongs to the IPP transferase family. Monomer. Mg(2+) serves as cofactor.

It catalyses the reaction adenosine(37) in tRNA + dimethylallyl diphosphate = N(6)-dimethylallyladenosine(37) in tRNA + diphosphate. Catalyzes the transfer of a dimethylallyl group onto the adenine at position 37 in tRNAs that read codons beginning with uridine, leading to the formation of N6-(dimethylallyl)adenosine (i(6)A). This is tRNA dimethylallyltransferase from Granulibacter bethesdensis (strain ATCC BAA-1260 / CGDNIH1).